Consider the following 331-residue polypeptide: Sucrose operon repressor (331 aa).

One can recognise an HTH lacI-type domain in the interval 1–56; the sequence is MASLKDVARLAGVSMMTVSRVMHNAESVRPATRDRVLQAIQTLNYVPDLSARKMRA. Positions 4–23 form a DNA-binding region, H-T-H motif; the sequence is LKDVARLAGVSMMTVSRVMH.

Repressor for the csc operon. Binds D-fructose as an inducer. The polypeptide is Sucrose operon repressor (cscR) (Escherichia coli).